Reading from the N-terminus, the 70-residue chain is MKLTCVLIIAVLFLTACQLTTGEQKDHALRSTDKNSKLTRQCTPVGGYCSRHYHCCSNHCIKSIGRCVAH.

The N-terminal stretch at 1–22 (MKLTCVLIIAVLFLTACQLTTG) is a signal peptide. The propeptide occupies 23-40 (EQKDHALRSTDKNSKLTR). Pyrrolidone carboxylic acid is present on glutamine 41. Intrachain disulfides connect cysteine 42/cysteine 56, cysteine 49/cysteine 60, and cysteine 55/cysteine 67.

Belongs to the conotoxin O1 superfamily. As to expression, expressed by the venom duct.

It localises to the secreted. This chain is Conotoxin ArMKLT2-0112, found in Conus arenatus (Sand-dusted cone).